We begin with the raw amino-acid sequence, 138 residues long: Putative pre-16S rRNA nuclease (138 aa).

This sequence belongs to the YqgF nuclease family.

Its subcellular location is the cytoplasm. Could be a nuclease involved in processing of the 5'-end of pre-16S rRNA. The protein is Putative pre-16S rRNA nuclease of Cronobacter sakazakii (strain ATCC BAA-894) (Enterobacter sakazakii).